Reading from the N-terminus, the 151-residue chain is C-C motif chemokine 25 (151 aa).

Positions 1–23 (MRPWLLACLVACFVGAWAPAIHA) are cleaved as a signal peptide. Cystine bridges form between Cys-30-Cys-58 and Cys-31-Cys-75. Residues 93-151 (RNKKDSKPHHSGRRFFQGPQSGVRKLSSGTSRPLLLKFSGPTRSSKRKASLLTTAIPGP) are disordered.

The protein belongs to the intercrine beta (chemokine CC) family.

It is found in the secreted. In terms of biological role, potentially involved in T-cell development. Recombinant protein shows chemotactic activity on thymocytes, macrophages, THP-1 cells, and dendritics cells but is inactive on peripheral blood lymphocytes and neutrophils. Binds to CCR9. Binds to atypical chemokine receptor ACKR4 and mediates the recruitment of beta-arrestin (ARRB1/2) to ACKR4. The sequence is that of C-C motif chemokine 25 (CCL25) from Sus scrofa (Pig).